The following is a 512-amino-acid chain: Maturase K (512 aa).

The protein belongs to the intron maturase 2 family. MatK subfamily.

The protein resides in the plastid. It is found in the chloroplast. Functionally, usually encoded in the trnK tRNA gene intron. Probably assists in splicing its own and other chloroplast group II introns. This chain is Maturase K, found in Soldanella alpina (Alpine snowbell).